The chain runs to 228 residues: Cytochrome c oxidase subunit 2 (228 aa).

The Mitochondrial intermembrane segment spans residues 1–14 (MAYPFQLGFQDATS). A helical transmembrane segment spans residues 15 to 45 (PIMEELLHFHDHTLMIVFLISSLVLYIISLM). At 46–59 (LTTKLTHTSTMDAQ) the chain is on the mitochondrial matrix side. Residues 60-87 (EVETIWTILPAIILILIALPSLRILYMM) form a helical membrane-spanning segment. Residues 88–228 (DEINNPALTV…FEKWSTSMLT (141 aa)) are Mitochondrial intermembrane-facing. Residues His-161, Cys-196, Glu-198, Cys-200, His-204, and Met-207 each coordinate Cu cation. Glu-198 is a Mg(2+) binding site. At Tyr-218 the chain carries Phosphotyrosine.

This sequence belongs to the cytochrome c oxidase subunit 2 family. Component of the cytochrome c oxidase (complex IV, CIV), a multisubunit enzyme composed of 14 subunits. The complex is composed of a catalytic core of 3 subunits MT-CO1, MT-CO2 and MT-CO3, encoded in the mitochondrial DNA, and 11 supernumerary subunits COX4I, COX5A, COX5B, COX6A, COX6B, COX6C, COX7A, COX7B, COX7C, COX8 and NDUFA4, which are encoded in the nuclear genome. The complex exists as a monomer or a dimer and forms supercomplexes (SCs) in the inner mitochondrial membrane with NADH-ubiquinone oxidoreductase (complex I, CI) and ubiquinol-cytochrome c oxidoreductase (cytochrome b-c1 complex, complex III, CIII), resulting in different assemblies (supercomplex SCI(1)III(2)IV(1) and megacomplex MCI(2)III(2)IV(2)). Found in a complex with TMEM177, COA6, COX18, COX20, SCO1 and SCO2. Interacts with TMEM177 in a COX20-dependent manner. Interacts with COX20. Interacts with COX16. The cofactor is Cu cation.

Its subcellular location is the mitochondrion inner membrane. The enzyme catalyses 4 Fe(II)-[cytochrome c] + O2 + 8 H(+)(in) = 4 Fe(III)-[cytochrome c] + 2 H2O + 4 H(+)(out). Component of the cytochrome c oxidase, the last enzyme in the mitochondrial electron transport chain which drives oxidative phosphorylation. The respiratory chain contains 3 multisubunit complexes succinate dehydrogenase (complex II, CII), ubiquinol-cytochrome c oxidoreductase (cytochrome b-c1 complex, complex III, CIII) and cytochrome c oxidase (complex IV, CIV), that cooperate to transfer electrons derived from NADH and succinate to molecular oxygen, creating an electrochemical gradient over the inner membrane that drives transmembrane transport and the ATP synthase. Cytochrome c oxidase is the component of the respiratory chain that catalyzes the reduction of oxygen to water. Electrons originating from reduced cytochrome c in the intermembrane space (IMS) are transferred via the dinuclear copper A center (CU(A)) of subunit 2 and heme A of subunit 1 to the active site in subunit 1, a binuclear center (BNC) formed by heme A3 and copper B (CU(B)). The BNC reduces molecular oxygen to 2 water molecules using 4 electrons from cytochrome c in the IMS and 4 protons from the mitochondrial matrix. The sequence is that of Cytochrome c oxidase subunit 2 (MT-CO2) from Sus scrofa (Pig).